A 516-amino-acid chain; its full sequence is GMP synthase [glutamine-hydrolyzing] (516 aa).

The region spanning 8–198 is the Glutamine amidotransferase type-1 domain; the sequence is KILILDFGSQ…VVNICGCDTL (191 aa). Cys84 (nucleophile) is an active-site residue. Catalysis depends on residues His172 and Glu174. Residues 199 to 391 form the GMPS ATP-PPase domain; it reads WNIENIIEND…LGLPYNMLYR (193 aa). Residue 226–232 participates in ATP binding; it reads SGGVDSS.

Homodimer.

It catalyses the reaction XMP + L-glutamine + ATP + H2O = GMP + L-glutamate + AMP + diphosphate + 2 H(+). It functions in the pathway purine metabolism; GMP biosynthesis; GMP from XMP (L-Gln route): step 1/1. In terms of biological role, catalyzes the synthesis of GMP from XMP. In Francisella tularensis subsp. tularensis (strain WY96-3418), this protein is GMP synthase [glutamine-hydrolyzing].